The sequence spans 255 residues: 2-succinyl-6-hydroxy-2,4-cyclohexadiene-1-carboxylate synthase (255 aa).

This sequence belongs to the AB hydrolase superfamily. MenH family. As to quaternary structure, monomer.

The catalysed reaction is 5-enolpyruvoyl-6-hydroxy-2-succinyl-cyclohex-3-ene-1-carboxylate = (1R,6R)-6-hydroxy-2-succinyl-cyclohexa-2,4-diene-1-carboxylate + pyruvate. Its pathway is quinol/quinone metabolism; 1,4-dihydroxy-2-naphthoate biosynthesis; 1,4-dihydroxy-2-naphthoate from chorismate: step 3/7. It participates in quinol/quinone metabolism; menaquinone biosynthesis. In terms of biological role, catalyzes a proton abstraction reaction that results in 2,5-elimination of pyruvate from 2-succinyl-5-enolpyruvyl-6-hydroxy-3-cyclohexene-1-carboxylate (SEPHCHC) and the formation of 2-succinyl-6-hydroxy-2,4-cyclohexadiene-1-carboxylate (SHCHC). The chain is 2-succinyl-6-hydroxy-2,4-cyclohexadiene-1-carboxylate synthase from Serratia proteamaculans (strain 568).